The following is a 916-amino-acid chain: Protein translocase subunit SecA (916 aa).

ATP is bound by residues Q86, 104–108, and D494; that span reads GEGKT. Residues 859 to 916 form a disordered region; the sequence is LEAPEKPAQLQYTAPSEGGGTQTRVETRSTGRSGNPAKAAEQDAAKDAAKRPAKKKRR. Residues 880-891 are compositionally biased toward polar residues; it reads QTRVETRSTGRS. Residues 898–908 show a composition bias toward basic and acidic residues; sequence AEQDAAKDAAK.

The protein belongs to the SecA family. Monomer and homodimer. Part of the essential Sec protein translocation apparatus which comprises SecA, SecYEG and auxiliary proteins SecDF. Other proteins may also be involved.

It is found in the cell membrane. Its subcellular location is the cytoplasm. The enzyme catalyses ATP + H2O + cellular proteinSide 1 = ADP + phosphate + cellular proteinSide 2.. Its function is as follows. Part of the Sec protein translocase complex. Interacts with the SecYEG preprotein conducting channel. Has a central role in coupling the hydrolysis of ATP to the transfer of proteins into and across the cell membrane, serving as an ATP-driven molecular motor driving the stepwise translocation of polypeptide chains across the membrane. This is Protein translocase subunit SecA from Pseudarthrobacter chlorophenolicus (strain ATCC 700700 / DSM 12829 / CIP 107037 / JCM 12360 / KCTC 9906 / NCIMB 13794 / A6) (Arthrobacter chlorophenolicus).